A 714-amino-acid polypeptide reads, in one-letter code: Mitochondrial potassium channel ATP-binding subunit (714 aa).

Residues 1-25 (MLVHLFRVGIRGGPVPRWSLQSLRF) constitute a mitochondrion transit peptide. Helical transmembrane passes span 127–147 (LLAL…NVQI), 178–198 (IQLL…LVLL), 278–298 (LMLA…GSGL), and 365–385 (NIAF…LVAG). An ABC transmembrane type-1 domain is found at 132–419 (LAIVLALGAA…LSVLFGQVVR (288 aa)). The region spanning 454-691 (ITFQNVSFSY…GGLYAELIRR (238 aa)) is the ABC transporter domain. 489–496 (GQSGGGKT) lines the ATP pocket.

The protein belongs to the ABC transporter superfamily. ABCB family. Multidrug resistance exporter (TC 3.A.1.201) subfamily. In terms of assembly, the mitochondrial potassium channel (mitoK(ATP)) is composed of 4 subunits of CCDC51/MITOK and 4 subunits of ABCB8/MITOSUR. Physically interacts with PAAT. Interacts with Neuropilin-1 (NRP1) in mitochondria. In terms of tissue distribution, strong expression is found in the heart, brain and testis. In the testis, expressed both in the somatic Sertoli cells and peritubular cells and in the germline (spermatogonia and pachytene spermatocytes). Also expressed in the lung, liver, intestine and kidney.

The protein localises to the mitochondrion inner membrane. Channel activity inhibited by ATP via ABCB8/MITOSUR subunit. ATP-binding subunit of the mitochondrial ATP-gated potassium channel (mitoK(ATP)). v. An increase in ATP intracellular levels closes the channel, inhibiting K(+) transport, whereas a decrease in ATP levels enhances K(+) uptake in the mitochondrial matrix. Plays a role in mitochondrial iron transport. Required for maintenance of normal cardiac function, possibly by influencing mitochondrial iron export and regulating the maturation of cytosolic iron sulfur cluster-containing enzymes. The sequence is that of Mitochondrial potassium channel ATP-binding subunit from Rattus norvegicus (Rat).